Here is a 196-residue protein sequence, read N- to C-terminus: Phosphoheptose isomerase (196 aa).

Positions 36–195 (VIQAYKLGKK…EKELFGEKVD (160 aa)) constitute an SIS domain. 51 to 53 (NGG) is a substrate binding site. Histidine 60 and glutamate 64 together coordinate Zn(2+). Residues glutamate 64, 93–94 (ND), 119–121 (STS), serine 124, and glutamine 171 contribute to the substrate site. Residues glutamine 171 and histidine 179 each coordinate Zn(2+).

The protein belongs to the SIS family. GmhA subfamily. Zn(2+) serves as cofactor.

It is found in the cytoplasm. It carries out the reaction 2 D-sedoheptulose 7-phosphate = D-glycero-alpha-D-manno-heptose 7-phosphate + D-glycero-beta-D-manno-heptose 7-phosphate. The protein operates within carbohydrate biosynthesis; D-glycero-D-manno-heptose 7-phosphate biosynthesis; D-glycero-alpha-D-manno-heptose 7-phosphate and D-glycero-beta-D-manno-heptose 7-phosphate from sedoheptulose 7-phosphate: step 1/1. Its function is as follows. Catalyzes the isomerization of sedoheptulose 7-phosphate in D-glycero-D-manno-heptose 7-phosphate. The protein is Phosphoheptose isomerase of Clostridium acetobutylicum (strain ATCC 824 / DSM 792 / JCM 1419 / IAM 19013 / LMG 5710 / NBRC 13948 / NRRL B-527 / VKM B-1787 / 2291 / W).